We begin with the raw amino-acid sequence, 335 residues long: D-alanine--D-alanine ligase (335 aa).

The 207-residue stretch at 124–330 (KMWFSALGVP…FTEYLSDVIS (207 aa)) folds into the ATP-grasp domain. 154–209 (AFDTWGSVFIKAASQGSSVGCYKVDVRDNIAKVLEEAFGYAPYVVVEKTIKARELE) is an ATP binding site. Residues Asp284, Glu297, and Asn299 each coordinate Mg(2+).

This sequence belongs to the D-alanine--D-alanine ligase family. The cofactor is Mg(2+). Requires Mn(2+) as cofactor.

Its subcellular location is the cytoplasm. The catalysed reaction is 2 D-alanine + ATP = D-alanyl-D-alanine + ADP + phosphate + H(+). It participates in cell wall biogenesis; peptidoglycan biosynthesis. In terms of biological role, cell wall formation. This chain is D-alanine--D-alanine ligase, found in Shewanella denitrificans (strain OS217 / ATCC BAA-1090 / DSM 15013).